The chain runs to 407 residues: Putative D-cysteine desulfhydrase 2, mitochondrial (407 aa).

Residues M1–T34 constitute a mitochondrion transit peptide. The interval P39 to P72 is disordered. N6-(pyridoxal phosphate)lysine is present on K90.

The protein belongs to the ACC deaminase/D-cysteine desulfhydrase family. Requires pyridoxal 5'-phosphate as cofactor.

It is found in the mitochondrion. It carries out the reaction D-cysteine + H2O = hydrogen sulfide + pyruvate + NH4(+) + H(+). Catalyzes the production of hydrogen sulfide (H2S) from cysteine. In Oryza sativa subsp. japonica (Rice), this protein is Putative D-cysteine desulfhydrase 2, mitochondrial.